Reading from the N-terminus, the 616-residue chain is Dihydroxy-acid dehydratase (616 aa).

Aspartate 81 provides a ligand contact to Mg(2+). Cysteine 122 is a [2Fe-2S] cluster binding site. Residues aspartate 123 and lysine 124 each coordinate Mg(2+). Residue lysine 124 is modified to N6-carboxylysine. [2Fe-2S] cluster is bound at residue cysteine 195. Residue glutamate 491 coordinates Mg(2+). Serine 517 functions as the Proton acceptor in the catalytic mechanism.

The protein belongs to the IlvD/Edd family. Homodimer. Requires [2Fe-2S] cluster as cofactor. It depends on Mg(2+) as a cofactor.

It carries out the reaction (2R)-2,3-dihydroxy-3-methylbutanoate = 3-methyl-2-oxobutanoate + H2O. The catalysed reaction is (2R,3R)-2,3-dihydroxy-3-methylpentanoate = (S)-3-methyl-2-oxopentanoate + H2O. The protein operates within amino-acid biosynthesis; L-isoleucine biosynthesis; L-isoleucine from 2-oxobutanoate: step 3/4. It participates in amino-acid biosynthesis; L-valine biosynthesis; L-valine from pyruvate: step 3/4. Functions in the biosynthesis of branched-chain amino acids. Catalyzes the dehydration of (2R,3R)-2,3-dihydroxy-3-methylpentanoate (2,3-dihydroxy-3-methylvalerate) into 2-oxo-3-methylpentanoate (2-oxo-3-methylvalerate) and of (2R)-2,3-dihydroxy-3-methylbutanoate (2,3-dihydroxyisovalerate) into 2-oxo-3-methylbutanoate (2-oxoisovalerate), the penultimate precursor to L-isoleucine and L-valine, respectively. The chain is Dihydroxy-acid dehydratase from Escherichia coli O81 (strain ED1a).